We begin with the raw amino-acid sequence, 430 residues long: Adenylosuccinate synthetase (430 aa).

GTP-binding positions include 12-18 and 40-42; these read GDEGKGK and GHT. Asp13 acts as the Proton acceptor in catalysis. Asp13 and Gly40 together coordinate Mg(2+). IMP contacts are provided by residues 13-16, 38-41, Thr130, Arg144, Gln224, Thr239, and Arg303; these read DEGK and NAGH. Residue His41 is the Proton donor of the active site. 299-305 contacts substrate; it reads TTTGRKR. GTP contacts are provided by residues Arg305, 331–333, and 413–415; these read KLD and STS.

This sequence belongs to the adenylosuccinate synthetase family. In terms of assembly, homodimer. Mg(2+) is required as a cofactor.

The protein resides in the cytoplasm. The catalysed reaction is IMP + L-aspartate + GTP = N(6)-(1,2-dicarboxyethyl)-AMP + GDP + phosphate + 2 H(+). It participates in purine metabolism; AMP biosynthesis via de novo pathway; AMP from IMP: step 1/2. Plays an important role in the de novo pathway of purine nucleotide biosynthesis. Catalyzes the first committed step in the biosynthesis of AMP from IMP. This is Adenylosuccinate synthetase from Ruegeria pomeroyi (strain ATCC 700808 / DSM 15171 / DSS-3) (Silicibacter pomeroyi).